A 1226-amino-acid chain; its full sequence is DNA-directed RNA polymerase subunit beta (1226 aa).

This sequence belongs to the RNA polymerase beta chain family. In terms of assembly, the RNAP catalytic core consists of 2 alpha, 1 beta, 1 beta' and 1 omega subunit. When a sigma factor is associated with the core the holoenzyme is formed, which can initiate transcription.

It carries out the reaction RNA(n) + a ribonucleoside 5'-triphosphate = RNA(n+1) + diphosphate. In terms of biological role, DNA-dependent RNA polymerase catalyzes the transcription of DNA into RNA using the four ribonucleoside triphosphates as substrates. In Leptospira interrogans serogroup Icterohaemorrhagiae serovar Lai (strain 56601), this protein is DNA-directed RNA polymerase subunit beta.